We begin with the raw amino-acid sequence, 303 residues long: tRNA pseudouridine synthase B (303 aa).

Aspartate 47 (nucleophile) is an active-site residue.

Belongs to the pseudouridine synthase TruB family. Type 1 subfamily.

It catalyses the reaction uridine(55) in tRNA = pseudouridine(55) in tRNA. Its function is as follows. Responsible for synthesis of pseudouridine from uracil-55 in the psi GC loop of transfer RNAs. The sequence is that of tRNA pseudouridine synthase B from Ruegeria pomeroyi (strain ATCC 700808 / DSM 15171 / DSS-3) (Silicibacter pomeroyi).